Reading from the N-terminus, the 935-residue chain is Ribonuclease E (935 aa).

The 81-residue stretch at 39-119 (ANIYKGKITR…GNKGAALTTF (81 aa)) folds into the S1 motif domain. The Mg(2+) site is built by Asp-302 and Asp-345. Residues Cys-403 and Cys-406 each contribute to the Zn(2+) site. The tract at residues 403 to 406 (CPRC) is required for zinc-mediated homotetramerization and catalytic activity. Disordered stretches follow at residues 571 to 669 (TKSE…DLRK) and 698 to 743 (VQNN…KSPM). Composition is skewed to basic and acidic residues over residues 593 to 625 (RSQD…ERNQ) and 701 to 719 (NDEK…ERQR). Over residues 720 to 734 (RTPRHLRAANNQRRR) the composition is skewed to basic residues.

Belongs to the RNase E/G family. RNase E subfamily. Component of the RNA degradosome, which is a multiprotein complex involved in RNA processing and mRNA degradation. Within the RNA degradosome, RNase E assembles into a homotetramer formed by a dimer of dimers. Requires Zn(2+) as cofactor. It depends on Mg(2+) as a cofactor.

The protein resides in the cytoplasm. The protein localises to the cell inner membrane. The enzyme catalyses Endonucleolytic cleavage of single-stranded RNA in A- and U-rich regions.. Functionally, endoribonuclease that plays a central role in RNA processing and decay. Required for the maturation of 5S and 16S rRNAs and the majority of tRNAs. Also involved in the degradation of most mRNAs. The chain is Ribonuclease E from Haemophilus influenzae (strain ATCC 51907 / DSM 11121 / KW20 / Rd).